A 962-amino-acid polypeptide reads, in one-letter code: Splicing regulator ARVCF (962 aa).

A coiled-coil region spans residues 11–46 (SILASVKEQEARFERLTRALEQERRHVALQLERAQQ). Residues 95 to 123 (VTVEEDPGTPTSHVSIVTSEDGTTRRTET) form a disordered region. Phosphothreonine is present on residues T103 and T105. A compositionally biased stretch (polar residues) spans 103–115 (TPTSHVSIVTSED). R171 is modified (omega-N-methylarginine). 3 disordered regions span residues 233 to 255 (GRREAFPMGSESGPPSGRSLPEH), 268 to 291 (RSLAADDEGGPDLEPDYSTATRRR), and 322 to 357 (AATAPLAQPERGSLGSLDRVVRRSPSVDSTRKEPRW). Residue S269 is modified to Phosphoserine. The segment covering 272-282 (ADDEGGPDLEP) has biased composition (acidic residues). Residues S334, S337, S345, and S347 each carry the phosphoserine modification. ARM repeat units lie at residues 350–389 (STRKEPRWRDPELPEVLAMLRHPVDPVKANAAAYLQHLCF), 392–431 (EGIKRRVRQLRGLPLLVALLDHPRAEVRRRACGALRNLSY), 435–469 (TDNKAAIRDCGGVPALVRLLRAARDNEVRELVTGT), 470–510 (LWNL…NEDS), 528–567 (LRNVSSDGAEARRRLRECEGLVDALLHALQSAVGRKDTDN), and 577–623 (MRNL…GKKA). The tract at residues 593-618 (RYQEAEPGIPGSTTSQRRRKDDASCF) is disordered. A Phosphoserine modification is found at S607. The Nuclear localization signal motif lies at 608–624 (QRRRKDDASCFGGKKAK). Phosphothreonine is present on T643. ARM repeat units follow at residues 647-687 (PKRT…AAGA), 700-739 (TYIRATVRKERGLPVLVELLQSETDKVVRAVAIALRNLSL), 740-782 (DQRN…AVLN), and 783-827 (TIHE…SHVL). A required for interaction with RNA-binding proteins DDX5, HNRNPH2 and SRSF1 and with mRNAs region spans residues 777 to 962 (VVAVLNTIHE…TKPQPVDSWV (186 aa)). The tract at residues 844–962 (GWTKSRFQSA…TKPQPVDSWV (119 aa)) is disordered. S864 and S871 each carry phosphoserine. T872 carries the phosphothreonine modification. Basic and acidic residues-rich tracts occupy residues 878 to 887 (KSLDGEKSNT) and 920 to 932 (TSEKELLRPDPGR).

Belongs to the beta-catenin family. As to quaternary structure, component of a ribonucleoprotein complex containing mRNAs and RNA-binding proteins including DDX5, HNRNPH2 and SRSF1 as well as ARVCF. Interacts (via the extreme C-terminus) with FRMPD2 (via the PDZ 2 domain). Interacts with CCDC85B.

The protein resides in the cell junction. The protein localises to the adherens junction. Its subcellular location is the nucleus. It localises to the cytoplasm. Its function is as follows. Contributes to the regulation of alternative splicing of pre-mRNAs. The protein is Splicing regulator ARVCF (Arvcf) of Mus musculus (Mouse).